A 317-amino-acid polypeptide reads, in one-letter code: Melanocyte-stimulating hormone receptor (317 aa).

At 1–37 (MPAQGSQRGLLGAVNFTPTATPHLRPAANQTGPQCLE) the chain is on the extracellular side. N-linked (GlcNAc...) asparagine glycosylation occurs at N29. Residues 38–63 (VSVPDGLFLCLGLVSLVENTLVVAAI) traverse the membrane as a helical segment. At 64-72 (AKNRNLHSP) the chain is on the cytoplasmic side. The chain crosses the membrane as a helical span at residues 73-93 (MYCFICCLALSDLLVSVSNLL). Topologically, residues 94 to 118 (ETAVLLLLEVGALAAQATVVQQLGN) are extracellular. A helical transmembrane segment spans residues 119 to 140 (VIDVLICSSMVSSLCSLGAIAM). Residues 141-163 (DRYISIFYALRYHSIVTLARARR) are Cytoplasmic-facing. The helical transmembrane segment at 164–183 (AIAAVWAASILSSTLFITYY) threads the bilayer. Over 184-191 (DRTAALLC) the chain is Extracellular. A helical membrane pass occupies residues 192–211 (LVVFFLAMLVLMALLYVHML). The Cytoplasmic portion of the chain corresponds to 212–240 (IQACQHAQAIARLHKRQHPVQQGWGLKGA). A helical transmembrane segment spans residues 241 to 266 (ATLTILLGVFFLCWGPFFLHLTLIAV). Residues 267 to 279 (CPQHPTCSCIFKN) lie on the Extracellular side of the membrane. A helical membrane pass occupies residues 280-300 (FRLFLALIICNTIVDPLIYAF). At 301–317 (RSQELRRTLKEVLLFSW) the chain is on the cytoplasmic side.

The protein belongs to the G-protein coupled receptor 1 family. In terms of assembly, interacts with MGRN1, but does not undergo MGRN1-mediated ubiquitination; this interaction competes with GNAS-binding and thus inhibits agonist-induced cAMP production. Interacts with OPN3; the interaction results in a decrease in MC1R-mediated cAMP signaling and ultimately a decrease in melanin production in melanocytes.

It localises to the cell membrane. Functionally, receptor for MSH (alpha, beta and gamma) and ACTH. The activity of this receptor is mediated by G proteins which activate adenylate cyclase. Mediates melanogenesis, the production of eumelanin (black/brown) and phaeomelanin (red/yellow), via regulation of cAMP signaling in melanocytes. The sequence is that of Melanocyte-stimulating hormone receptor (MC1R) from Eulemur fulvus fulvus (Brown lemur).